The chain runs to 194 residues: Exopolysaccharide II synthesis transcriptional activator ExpG (194 aa).

In terms of domain architecture, HTH marR-type spans 49-184; sequence YFELARVMER…AFQTLHRLEL (136 aa).

Functionally, transcriptional activator of genes for galactoglucan synthesis (exopolysaccharide II or EPS II). The polypeptide is Exopolysaccharide II synthesis transcriptional activator ExpG (expG) (Rhizobium meliloti (strain 1021) (Ensifer meliloti)).